Here is an 846-residue protein sequence, read N- to C-terminus: Translation initiation factor IF-2 (846 aa).

A disordered region spans residues 199–219 (KREEEEKKSKAKKAGGKGFKK). Basic residues predominate over residues 207–219 (SKAKKAGGKGFKK). The region spanning 345-512 (SRAPVVTIMG…AVLLQSEVLE (168 aa)) is the tr-type G domain. Positions 354-361 (GHVDHGKT) are G1. 354-361 (GHVDHGKT) is a binding site for GTP. The G2 stretch occupies residues 379 to 383 (GITQH). The interval 400-403 (DTPG) is G3. GTP contacts are provided by residues 400 to 404 (DTPGH) and 454 to 457 (NKID). The G4 stretch occupies residues 454-457 (NKID). Residues 490–492 (SAK) form a G5 region.

It belongs to the TRAFAC class translation factor GTPase superfamily. Classic translation factor GTPase family. IF-2 subfamily.

It is found in the cytoplasm. In terms of biological role, one of the essential components for the initiation of protein synthesis. Protects formylmethionyl-tRNA from spontaneous hydrolysis and promotes its binding to the 30S ribosomal subunits. Also involved in the hydrolysis of GTP during the formation of the 70S ribosomal complex. This chain is Translation initiation factor IF-2, found in Francisella tularensis subsp. holarctica (strain LVS).